The sequence spans 570 residues: Urease subunit alpha (570 aa).

In terms of domain architecture, Urease spans 132–570 (GGFDSHIHYI…LPLAQRYFLF (439 aa)). The Ni(2+) site is built by His-137, His-139, and Lys-220. At Lys-220 the chain carries N6-carboxylysine. His-222 serves as a coordination point for substrate. Residues His-249 and His-275 each coordinate Ni(2+). His-323 serves as the catalytic Proton donor. A Ni(2+)-binding site is contributed by Asp-363.

The protein belongs to the metallo-dependent hydrolases superfamily. Urease alpha subunit family. As to quaternary structure, heterotrimer of UreA (gamma), UreB (beta) and UreC (alpha) subunits. Three heterotrimers associate to form the active enzyme. It depends on Ni cation as a cofactor. In terms of processing, carboxylation allows a single lysine to coordinate two nickel ions.

It localises to the cytoplasm. It catalyses the reaction urea + 2 H2O + H(+) = hydrogencarbonate + 2 NH4(+). Its pathway is nitrogen metabolism; urea degradation; CO(2) and NH(3) from urea (urease route): step 1/1. The chain is Urease subunit alpha from Ruegeria sp. (strain TM1040) (Silicibacter sp.).